A 726-amino-acid chain; its full sequence is Catalase-peroxidase (726 aa).

The tract at residues 1-33 (MSTSDDIHNTTATGKCPFHQGGHDQSAGAGTTT) is disordered. Residues 105–226 (WHGAGTYRSI…LGATEMGLIY (122 aa)) constitute a cross-link (tryptophyl-tyrosyl-methioninium (Trp-Tyr) (with M-252)). His106 acts as the Proton acceptor in catalysis. Positions 226 to 252 (YVNPEGPDHSGEPLSAAAAIRATFGNM) form a cross-link, tryptophyl-tyrosyl-methioninium (Tyr-Met) (with W-105). His267 contributes to the heme b binding site.

Belongs to the peroxidase family. Peroxidase/catalase subfamily. As to quaternary structure, homodimer or homotetramer. It depends on heme b as a cofactor. Post-translationally, formation of the three residue Trp-Tyr-Met cross-link is important for the catalase, but not the peroxidase activity of the enzyme.

It catalyses the reaction H2O2 + AH2 = A + 2 H2O. The enzyme catalyses 2 H2O2 = O2 + 2 H2O. Functionally, bifunctional enzyme with both catalase and broad-spectrum peroxidase activity. This chain is Catalase-peroxidase, found in Shigella boydii serotype 4 (strain Sb227).